Reading from the N-terminus, the 557-residue chain is Potassium-transporting ATPase potassium-binding subunit (557 aa).

Helical transmembrane passes span 5–25 (GFLL…PLGS), 63–83 (LCAI…MLLG), 132–152 (GLTV…FAFI), 170–190 (LLRI…LFFI), 253–273 (FVQM…FGEV), 283–303 (LLWA…WAEV), 329–349 (VLVS…AVIA), 356–376 (ALGG…FGGV), 379–399 (GLYG…LMIG), 416–436 (LTAL…ALAM), 484–504 (LLAF…MAIA), and 526–546 (LFVG…FIPA).

Belongs to the KdpA family. In terms of assembly, the system is composed of three essential subunits: KdpA, KdpB and KdpC.

The protein resides in the cell inner membrane. Part of the high-affinity ATP-driven potassium transport (or Kdp) system, which catalyzes the hydrolysis of ATP coupled with the electrogenic transport of potassium into the cytoplasm. This subunit binds the periplasmic potassium ions and delivers the ions to the membrane domain of KdpB through an intramembrane tunnel. The protein is Potassium-transporting ATPase potassium-binding subunit of Shigella boydii serotype 4 (strain Sb227).